Here is a 636-residue protein sequence, read N- to C-terminus: Leucine-rich repeat and fibronectin type-III domain-containing protein 4 (636 aa).

An N-terminal signal peptide occupies residues 1-16; the sequence is MAPPLLLLLLASGAAA. The LRRNT domain maps to 17–48; the sequence is CPLPCVCQNLSESLSTLCAHRGLLFVPPNVDR. At 17-518 the chain is on the extracellular side; sequence CPLPCVCQNL…LQAHVLGGTL (502 aa). N-linked (GlcNAc...) asparagine glycosylation occurs at N25. LRR repeat units lie at residues 49 to 70, 73 to 94, 97 to 118, 121 to 142, 146 to 169, 170 to 191, and 194 to 215; these read RTVE…DFRN, GLVD…SFGD, SLRS…SLRG, NLQH…AFDD, SLED…GSMP, ALHT…VFAQ, and QLSR…PLFS. Positions 234-280 constitute an LRRCT domain; it reads NPLHCNCELLWLRRLARPDDLETCASPPTLAGRYFWAVPEGEFSCEP. Positions 281-367 constitute an Ig-like domain; it reads PLIARHTQRL…GEATARVELR (87 aa). Residues C302 and C351 are joined by a disulfide bond. Residue N333 is glycosylated (N-linked (GlcNAc...) asparagine). Positions 405–502 constitute a Fibronectin type-III domain; sequence SEPAVQVTEV…GCAHFSTLPA (98 aa). Residues 519–539 form a helical membrane-spanning segment; that stretch reads TVAVGGVLVAALLVFTVALLV. Topologically, residues 540-636 are cytoplasmic; sequence RGRGAGNGRL…SAERLEESVV (97 aa). Positions 556–585 are disordered; sequence VQSQTNGGTSPMPKSHPPRSPPPRPQRSCS. A compositionally biased stretch (pro residues) spans 569–580; sequence KSHPPRSPPPRP. A phosphoserine mark is found at S585 and S627. The PDZ-binding motif lies at 633-636; that stretch reads ESVV.

The protein belongs to the LRFN family. In terms of assembly, forms heteromeric complexes with LRFN1 and LRFN2. Can form heteromeric complexes with LRFN3 and LRFN5. Unable to form homophilic interactions across cell junctions. Interacts with DLG1, DLG2, DLG3 and DLG4. In terms of processing, glycosylated.

The protein localises to the membrane. Functionally, promotes neurite outgrowth in hippocampal neurons. May play a role in redistributing DLG4 to the cell periphery. In Rattus norvegicus (Rat), this protein is Leucine-rich repeat and fibronectin type-III domain-containing protein 4 (Lrfn4).